Here is a 151-residue protein sequence, read N- to C-terminus: UPF0756 membrane protein Aflv_0503 (151 aa).

The next 4 helical transmembrane spans lie at 4-24 (FIFL…SLII), 52-72 (LGVT…KIGF), 85-105 (WIAM…VALL), and 115-135 (LVLG…GPLI).

This sequence belongs to the UPF0756 family.

Its subcellular location is the cell membrane. This is UPF0756 membrane protein Aflv_0503 from Anoxybacillus flavithermus (strain DSM 21510 / WK1).